Consider the following 1222-residue polypeptide: ATP-dependent helicase/nuclease subunit A (1222 aa).

One can recognise a UvrD-like helicase ATP-binding domain in the interval 39-495 (QKRTAQQIEA…ILLKENFRSQ (457 aa)). 60–67 (ASAGSGKT) provides a ligand contact to ATP. The region spanning 524 to 810 (QLIAGSHAQT…NLMTIHKSKG (287 aa)) is the UvrD-like helicase C-terminal domain.

Belongs to the helicase family. AddA subfamily. In terms of assembly, heterodimer of AddA and AddB/RexB. Mg(2+) serves as cofactor.

It carries out the reaction Couples ATP hydrolysis with the unwinding of duplex DNA by translocating in the 3'-5' direction.. The catalysed reaction is ATP + H2O = ADP + phosphate + H(+). Functionally, the heterodimer acts as both an ATP-dependent DNA helicase and an ATP-dependent, dual-direction single-stranded exonuclease. Recognizes the chi site generating a DNA molecule suitable for the initiation of homologous recombination. The AddA nuclease domain is required for chi fragment generation; this subunit has the helicase and 3' -&gt; 5' nuclease activities. The protein is ATP-dependent helicase/nuclease subunit A of Streptococcus pyogenes serotype M12 (strain MGAS9429).